A 200-amino-acid polypeptide reads, in one-letter code: Probable GTP-binding protein EngB (200 aa).

The region spanning 22–199 (NVAEVAFLGR…QDKITGYLFG (178 aa)) is the EngB-type G domain. Residues 30-37 (GRSNVGKS), 57-61 (GKTQL), 85-88 (DLPG), 155-158 (TKID), and 177-180 (FLSN) each bind GTP. Mg(2+)-binding residues include Ser-37 and Thr-59.

The protein belongs to the TRAFAC class TrmE-Era-EngA-EngB-Septin-like GTPase superfamily. EngB GTPase family. Requires Mg(2+) as cofactor.

Functionally, necessary for normal cell division and for the maintenance of normal septation. In Aliarcobacter butzleri (strain RM4018) (Arcobacter butzleri), this protein is Probable GTP-binding protein EngB.